The following is a 569-amino-acid chain: S-(+)-linalool synthase, chloroplastic (569 aa).

The transit peptide at 1–39 directs the protein to the chloroplast; sequence MALIATKISSRSCFVSAYPNNSPTFLISKFPNTVDSLSP. (2E)-geranyl diphosphate-binding residues include Arg-294, Asp-331, Asp-335, Arg-472, and Asp-475. Mg(2+) is bound by residues Asp-331 and Asp-335. A DDXXD motif motif is present at residues 331-335; the sequence is DDIFD. Mg(2+)-binding residues include Asp-475, Ser-479, and Glu-483.

Belongs to the terpene synthase family. Tpsb subfamily. Mg(2+) is required as a cofactor. Requires Mn(2+) as cofactor. As to expression, predominantly expressed in flowers but also in stems and siliques.

It localises to the plastid. Its subcellular location is the chloroplast. It catalyses the reaction (2E)-geranyl diphosphate + H2O = (S)-linalool + diphosphate. The protein operates within secondary metabolite biosynthesis; terpenoid biosynthesis. In terms of biological role, involved in monoterpene (C10) biosynthesis. The major product is (S)-linalool. This Arabidopsis thaliana (Mouse-ear cress) protein is S-(+)-linalool synthase, chloroplastic.